Consider the following 223-residue polypeptide: Proteinase inhibitor type-2 TR8 (223 aa).

The N-terminal stretch at 1 to 24 (MAIYKVALLLLFGMILLASDFEHA) is a signal peptide. 3 consecutive repeat copies span residues 24–81 (AKAC…EWVS), 88–145 (KKAC…EWVS), and 152–209 (EKDC…EWVS). Disulfide bonds link cysteine 27/cysteine 120, cysteine 31/cysteine 116, cysteine 40/cysteine 126, cysteine 52/cysteine 95, cysteine 55/cysteine 73, cysteine 56/cysteine 91, cysteine 62/cysteine 104, and cysteine 119/cysteine 137.

This sequence belongs to the protease inhibitor I20 (potato type II proteinase inhibitor) family.

The chain is Proteinase inhibitor type-2 TR8 (ARPI) from Solanum lycopersicum (Tomato).